The primary structure comprises 862 residues: Switch 2 (862 aa).

Disordered regions lie at residues 13-43 (PCGS…SSLS) and 58-95 (KHES…DDER). The span at 16 to 27 (SFPSSSSLRVSS) shows a compositional bias: low complexity. Positions 58 to 84 (KHESKISKTQVEDFDHNEDDHKRNIKF) are enriched in basic and acidic residues. The span at 85-95 (DEEEVDEDDER) shows a compositional bias: acidic residues. The 173-residue stretch at 151 to 323 (YNLYKNNHGG…FNLFEWVAPG (173 aa)) folds into the Helicase ATP-binding domain. Residue 164 to 171 (DDMGLGKT) participates in ATP binding. The DEAH box signature appears at 274 to 277 (DEAH). Residues 274-294 (DEAHRLKNEKSKLYEACLEIK) are a coiled coil. Residues 532–685 (ALEKLMASWI…VAGKMETRYF (154 aa)) enclose the Helicase C-terminal domain. Over residues 782-793 (TTSTSQRLNGDG) the composition is skewed to polar residues. Residues 782–821 (TTSTSQRLNGDGNSADRKKKKRKGCSEEEDMSSSNREQKR) form a disordered region.

This sequence belongs to the SNF2/RAD54 helicase family.

In terms of biological role, may be involved in early DNA damage response. Probable chromatin remodeling factor. The polypeptide is Switch 2 (Arabidopsis thaliana (Mouse-ear cress)).